A 144-amino-acid chain; its full sequence is Mannitol-specific phosphotransferase enzyme IIA component (144 aa).

Positions 3 to 142 (ELFSNDNIFL…EEIKQVFEEA (140 aa)) constitute a PTS EIIA type-2 domain. Residue His63 is the Tele-phosphohistidine intermediate of the active site. His63 carries the post-translational modification Phosphohistidine; by HPr.

Homodimer or homotrimer. Seems to be a monomer when not phosphorylated.

Its subcellular location is the cytoplasm. In terms of biological role, the phosphoenolpyruvate-dependent sugar phosphotransferase system (sugar PTS), a major carbohydrate active transport system, catalyzes the phosphorylation of incoming sugar substrates concomitantly with their translocation across the cell membrane. The enzyme II CmtAB PTS system is involved in D-mannitol transport. The polypeptide is Mannitol-specific phosphotransferase enzyme IIA component (mtlF) (Staphylococcus aureus (strain COL)).